A 143-amino-acid polypeptide reads, in one-letter code: Large ribosomal subunit protein uL11 (143 aa).

Belongs to the universal ribosomal protein uL11 family. Part of the ribosomal stalk of the 50S ribosomal subunit. Interacts with L10 and the large rRNA to form the base of the stalk. L10 forms an elongated spine to which L12 dimers bind in a sequential fashion forming a multimeric L10(L12)X complex. Post-translationally, one or more lysine residues are methylated.

In terms of biological role, forms part of the ribosomal stalk which helps the ribosome interact with GTP-bound translation factors. This is Large ribosomal subunit protein uL11 from Saccharophagus degradans (strain 2-40 / ATCC 43961 / DSM 17024).